Reading from the N-terminus, the 289-residue chain is 4-diphosphocytidyl-2-C-methyl-D-erythritol kinase (289 aa).

K16 is an active-site residue. Position 99–109 (99–109 (PMGGGLGGGSS)) interacts with ATP. D141 is an active-site residue.

Belongs to the GHMP kinase family. IspE subfamily.

It carries out the reaction 4-CDP-2-C-methyl-D-erythritol + ATP = 4-CDP-2-C-methyl-D-erythritol 2-phosphate + ADP + H(+). Its pathway is isoprenoid biosynthesis; isopentenyl diphosphate biosynthesis via DXP pathway; isopentenyl diphosphate from 1-deoxy-D-xylulose 5-phosphate: step 3/6. Its function is as follows. Catalyzes the phosphorylation of the position 2 hydroxy group of 4-diphosphocytidyl-2C-methyl-D-erythritol. The protein is 4-diphosphocytidyl-2-C-methyl-D-erythritol kinase of Ralstonia pickettii (strain 12J).